The following is a 106-amino-acid chain: Nucleoid-associated protein MCCL_1934 (106 aa).

A disordered region spans residues 1–34 (MRGGGNMQQMMKQMQKMQKKMAEEQEKLKEERIE). Residues 7 to 16 (MQQMMKQMQK) are compositionally biased toward low complexity. Basic and acidic residues predominate over residues 20–34 (KMAEEQEKLKEERIE).

It belongs to the YbaB/EbfC family. As to quaternary structure, homodimer.

The protein resides in the cytoplasm. It localises to the nucleoid. In terms of biological role, binds to DNA and alters its conformation. May be involved in regulation of gene expression, nucleoid organization and DNA protection. This chain is Nucleoid-associated protein MCCL_1934, found in Macrococcus caseolyticus (strain JCSC5402) (Macrococcoides caseolyticum).